Consider the following 518-residue polypeptide: Protein nucleotidyltransferase YdiU (518 aa).

ATP-binding residues include Gly99, Gly101, Arg102, Lys122, Asp134, Gly135, Arg192, and Arg199. Residue Asp270 is the Proton acceptor of the active site. Residues Asn271 and Asp280 each contribute to the Mg(2+) site. Position 280 (Asp280) interacts with ATP.

This sequence belongs to the SELO family. Mg(2+) is required as a cofactor. Mn(2+) serves as cofactor.

The enzyme catalyses L-seryl-[protein] + ATP = 3-O-(5'-adenylyl)-L-seryl-[protein] + diphosphate. It carries out the reaction L-threonyl-[protein] + ATP = 3-O-(5'-adenylyl)-L-threonyl-[protein] + diphosphate. It catalyses the reaction L-tyrosyl-[protein] + ATP = O-(5'-adenylyl)-L-tyrosyl-[protein] + diphosphate. The catalysed reaction is L-histidyl-[protein] + UTP = N(tele)-(5'-uridylyl)-L-histidyl-[protein] + diphosphate. The enzyme catalyses L-seryl-[protein] + UTP = O-(5'-uridylyl)-L-seryl-[protein] + diphosphate. It carries out the reaction L-tyrosyl-[protein] + UTP = O-(5'-uridylyl)-L-tyrosyl-[protein] + diphosphate. In terms of biological role, nucleotidyltransferase involved in the post-translational modification of proteins. It can catalyze the addition of adenosine monophosphate (AMP) or uridine monophosphate (UMP) to a protein, resulting in modifications known as AMPylation and UMPylation. This Methylobacillus flagellatus (strain ATCC 51484 / DSM 6875 / VKM B-1610 / KT) protein is Protein nucleotidyltransferase YdiU.